The primary structure comprises 86 residues: Protein K3 homolog (86 aa).

One can recognise an S1 motif domain in the interval 15-86; it reads NINDITQGII…LKGYIDVSIV (72 aa).

This sequence belongs to the poxviridae K3 protein family. In terms of assembly, interacts with host PKR kinase.

Viral mimic of eIF-2-alpha that acts as a pseudosubstrate for EIF2AK2/PKR kinase. Inhibits therefore eIF-2-alpha phosphorylation by host EIF2AK2/PKR kinase and prevents protein synthesis shutoff. The chain is Protein K3 homolog from Sus scrofa (Pig).